The primary structure comprises 544 residues: Sialidase (544 aa).

An N-terminal signal peptide occupies residues 1–22 (MKKAVILFSLFCFLCAIPVVQA). 3 BNR repeats span residues 239-250 (SRSTDGGKTWEK), 318-329 (AKSTDDGKTWSA), and 378-389 (MYSKDGGKNWKM). Residue Glu-399 is part of the active site. Position 415 (Arg-415) interacts with substrate. The BNR 4 repeat unit spans residues 425-436 (AITKDLGKTWTE). Residue Arg-479 participates in substrate binding. The BNR 5 repeat unit spans residues 485–496 (KISLDGGVTWSP).

It belongs to the glycosyl hydrolase 33 family.

It is found in the periplasm. It catalyses the reaction Hydrolysis of alpha-(2-&gt;3)-, alpha-(2-&gt;6)-, alpha-(2-&gt;8)- glycosidic linkages of terminal sialic acid residues in oligosaccharides, glycoproteins, glycolipids, colominic acid and synthetic substrates.. Functionally, sialidases have been suggested to be pathogenic factors in microbial infections. The sequence is that of Sialidase (nanH) from Bacteroides fragilis (strain YCH46).